We begin with the raw amino-acid sequence, 158 residues long: Pycsar effector protein SaPycTM (158 aa).

3 helical membrane passes run 20-40 (FADAKALAIISINGFILNFNF), 53-73 (IFNFTAFILLIITIILAAFAV), and 136-156 (VFIISALGYSCLLFSSIFQII).

Its subcellular location is the cell membrane. In terms of biological role, pycsar (pyrimidine cyclase system for antiphage resistance) provides immunity against bacteriophage. The pyrimidine cyclase (PycC) synthesizes cyclic nucleotides in response to infection; these serve as specific second messenger signals. The signals activate the adjacent effector, leading to bacterial cell death and abortive phage infection. A clade E Pycsar system. Its function is as follows. The effector gene of a two-gene Pycsar system. Expression of this and adjacent SaPycC cytidylate cyclase (AC P0DV38) probably confers resistance to bacteriophage. The genes are probably only expressed in response to bacteriophage infection. Probably only responds to cCMP (produced by its cognate NTP cyclase), acts by impairing membrane integrity. The sequence is that of Pycsar effector protein SaPycTM from Staphylococcus aureus.